The primary structure comprises 485 residues: PTS system arbutin-, cellobiose-, and salicin-specific EIIBC component (485 aa).

The PTS EIIB type-1 domain maps to 1–88 (MAKNYAALAR…VSLLPGDMQP (88 aa)). The Phosphocysteine intermediate; for EIIB activity role is filled by cysteine 28. 10 helical membrane-spanning segments follow: residues 102–122 (IGAG…PAII), 147–167 (LTIL…MVAA), 177–197 (MSLA…ELMA), 207–227 (FALI…ALVM), 254–274 (LIVL…GIWI), 285–305 (IHGY…PLLV), 330–350 (VMPS…AVAW), 363–383 (AAAA…GVAI), 389–409 (LIAS…AGLA), and 433–453 (IVWV…LTLL). The PTS EIIC type-1 domain occupies 108-470 (DALIGTMSPL…VEEAAAQARK (363 aa)).

Its subcellular location is the cell inner membrane. Functionally, the phosphoenolpyruvate-dependent sugar phosphotransferase system (sugar PTS), a major carbohydrate active -transport system, catalyzes the phosphorylation of incoming sugar substrates concomitantly with their translocation across the cell membrane. This system is involved in arbutin, cellobiose, and salicin transport. The chain is PTS system arbutin-, cellobiose-, and salicin-specific EIIBC component (ascF) from Escherichia coli (strain K12).